A 127-amino-acid polypeptide reads, in one-letter code: MSAKSSEPPFEPSSEGEQLPSRFEVELEFVQSLANIPYVTFLLTQHQIWQDPRFKAYLKYLEYWCEPPYTQFIVYPNCLFVLKLLNSFLDKAVENEDGILEGAEDLPKVIQMQGGEWMNQMVERWRG.

Belongs to the Mediator complex subunit 31 family. In terms of assembly, component of the Mediator complex.

The protein localises to the nucleus. In terms of biological role, component of the Mediator complex, a coactivator involved in the regulated transcription of nearly all RNA polymerase II-dependent genes. Mediator functions as a bridge to convey information from gene-specific regulatory proteins to the basal RNA polymerase II transcription machinery. Mediator is recruited to promoters by direct interactions with regulatory proteins and serves as a scaffold for the assembly of a functional preinitiation complex with RNA polymerase II and the general transcription factors. The sequence is that of Mediator of RNA polymerase II transcription subunit 31 (SOH1) from Eremothecium gossypii (strain ATCC 10895 / CBS 109.51 / FGSC 9923 / NRRL Y-1056) (Yeast).